We begin with the raw amino-acid sequence, 196 residues long: Holliday junction branch migration complex subunit RuvA (196 aa).

The segment at 1–63 is domain I; sequence MYDYIKGTLV…DDAHLLFGFH (63 aa). A domain II region spans residues 64–142; that stretch reads TEDEKEVFLK…ELPAETTNTT (79 aa). Positions 143 to 146 are flexible linker; the sequence is ANQT. The segment at 147 to 196 is domain III; sequence AGNQQLDEAMEALLALGYKATELKKVKAFFEDTNETAEQYIKSALKMLMK.

This sequence belongs to the RuvA family. In terms of assembly, homotetramer. Forms an RuvA(8)-RuvB(12)-Holliday junction (HJ) complex. HJ DNA is sandwiched between 2 RuvA tetramers; dsDNA enters through RuvA and exits via RuvB. An RuvB hexamer assembles on each DNA strand where it exits the tetramer. Each RuvB hexamer is contacted by two RuvA subunits (via domain III) on 2 adjacent RuvB subunits; this complex drives branch migration. In the full resolvosome a probable DNA-RuvA(4)-RuvB(12)-RuvC(2) complex forms which resolves the HJ.

Its subcellular location is the cytoplasm. Functionally, the RuvA-RuvB-RuvC complex processes Holliday junction (HJ) DNA during genetic recombination and DNA repair, while the RuvA-RuvB complex plays an important role in the rescue of blocked DNA replication forks via replication fork reversal (RFR). RuvA specifically binds to HJ cruciform DNA, conferring on it an open structure. The RuvB hexamer acts as an ATP-dependent pump, pulling dsDNA into and through the RuvAB complex. HJ branch migration allows RuvC to scan DNA until it finds its consensus sequence, where it cleaves and resolves the cruciform DNA. The chain is Holliday junction branch migration complex subunit RuvA from Streptococcus thermophilus (strain ATCC BAA-491 / LMD-9).